Here is a 156-residue protein sequence, read N- to C-terminus: Small ribosomal subunit protein uS7 (156 aa).

This sequence belongs to the universal ribosomal protein uS7 family. Part of the 30S ribosomal subunit. Contacts proteins S9 and S11.

One of the primary rRNA binding proteins, it binds directly to 16S rRNA where it nucleates assembly of the head domain of the 30S subunit. Is located at the subunit interface close to the decoding center, probably blocks exit of the E-site tRNA. The sequence is that of Small ribosomal subunit protein uS7 from Staphylococcus carnosus (strain TM300).